Consider the following 326-residue polypeptide: 2-dehydropantoate 2-reductase (326 aa).

NADP(+) contacts are provided by residues G7–G12 and N103. N103 is a substrate binding site. K205 functions as the Proton donor in the catalytic mechanism. Substrate is bound by residues N209, N213, and S274. E286 lines the NADP(+) pocket.

The protein belongs to the ketopantoate reductase family.

It localises to the cytoplasm. The enzyme catalyses (R)-pantoate + NADP(+) = 2-dehydropantoate + NADPH + H(+). The protein operates within cofactor biosynthesis; (R)-pantothenate biosynthesis; (R)-pantoate from 3-methyl-2-oxobutanoate: step 2/2. In terms of biological role, catalyzes the NADPH-dependent reduction of ketopantoate into pantoic acid. The polypeptide is 2-dehydropantoate 2-reductase (Mesorhizobium japonicum (strain LMG 29417 / CECT 9101 / MAFF 303099) (Mesorhizobium loti (strain MAFF 303099))).